Reading from the N-terminus, the 274-residue chain is Formamidopyrimidine-DNA glycosylase (274 aa).

P2 functions as the Schiff-base intermediate with DNA in the catalytic mechanism. Residue E3 is the Proton donor of the active site. Residue K58 is the Proton donor; for beta-elimination activity of the active site. H91 and R110 together coordinate DNA. The FPG-type zinc finger occupies 238–272 (QVYDKTGQECVRCGTIIEKIQLGGRGTHFCPNCQR). The active-site Proton donor; for delta-elimination activity is R262.

This sequence belongs to the FPG family. Monomer. Zn(2+) is required as a cofactor.

It catalyses the reaction Hydrolysis of DNA containing ring-opened 7-methylguanine residues, releasing 2,6-diamino-4-hydroxy-5-(N-methyl)formamidopyrimidine.. The enzyme catalyses 2'-deoxyribonucleotide-(2'-deoxyribose 5'-phosphate)-2'-deoxyribonucleotide-DNA = a 3'-end 2'-deoxyribonucleotide-(2,3-dehydro-2,3-deoxyribose 5'-phosphate)-DNA + a 5'-end 5'-phospho-2'-deoxyribonucleoside-DNA + H(+). In terms of biological role, involved in base excision repair of DNA damaged by oxidation or by mutagenic agents. Acts as a DNA glycosylase that recognizes and removes damaged bases. Has a preference for oxidized purines, such as 7,8-dihydro-8-oxoguanine (8-oxoG). Has AP (apurinic/apyrimidinic) lyase activity and introduces nicks in the DNA strand. Cleaves the DNA backbone by beta-delta elimination to generate a single-strand break at the site of the removed base with both 3'- and 5'-phosphates. This Streptococcus pneumoniae (strain ATCC BAA-255 / R6) protein is Formamidopyrimidine-DNA glycosylase.